The primary structure comprises 337 residues: tRNA N6-adenosine threonylcarbamoyltransferase (337 aa).

Fe cation is bound by residues His111 and His115. Residues Leu134 to Gly138, Asp167, Gly180, and Asn272 each bind substrate. A Fe cation-binding site is contributed by Asp300.

The protein belongs to the KAE1 / TsaD family. Fe(2+) is required as a cofactor.

It is found in the cytoplasm. It catalyses the reaction L-threonylcarbamoyladenylate + adenosine(37) in tRNA = N(6)-L-threonylcarbamoyladenosine(37) in tRNA + AMP + H(+). Its function is as follows. Required for the formation of a threonylcarbamoyl group on adenosine at position 37 (t(6)A37) in tRNAs that read codons beginning with adenine. Is involved in the transfer of the threonylcarbamoyl moiety of threonylcarbamoyl-AMP (TC-AMP) to the N6 group of A37, together with TsaE and TsaB. TsaD likely plays a direct catalytic role in this reaction. This chain is tRNA N6-adenosine threonylcarbamoyltransferase, found in Citrobacter koseri (strain ATCC BAA-895 / CDC 4225-83 / SGSC4696).